Reading from the N-terminus, the 254-residue chain is Acetylglutamate kinase (254 aa).

Residues 40 to 41, Arg-62, and Asn-154 each bind substrate; that span reads GG. Residues 177-182 and 205-207 contribute to the ATP site; these read DVSGIL and IIT.

It belongs to the acetylglutamate kinase family. ArgB subfamily. Homodimer.

The protein resides in the cytoplasm. The enzyme catalyses N-acetyl-L-glutamate + ATP = N-acetyl-L-glutamyl 5-phosphate + ADP. The protein operates within amino-acid biosynthesis; L-arginine biosynthesis; N(2)-acetyl-L-ornithine from L-glutamate: step 2/4. Catalyzes the ATP-dependent phosphorylation of N-acetyl-L-glutamate. In Yersinia enterocolitica serotype O:8 / biotype 1B (strain NCTC 13174 / 8081), this protein is Acetylglutamate kinase.